A 506-amino-acid chain; its full sequence is Cytochrome P450 monooxygenase tpcB (506 aa).

Cysteine 450 provides a ligand contact to heme.

It belongs to the cytochrome P450 family. It depends on heme as a cofactor.

The protein operates within secondary metabolite biosynthesis; terpenoid biosynthesis. In terms of biological role, cytochrome P450 monooxygenase; part of the gene cluster that mediates the biosynthesis of terpestacin. The bifunctional terpene synthase tpcA converts isopentenyl diphosphate (IPP) and dimethylallyl diphosphate (DMAPP) into the sesterterpene preterpestacin I. The C-terminal prenyltransferase (PT) domain of tpcA catalyzes formation of GFPP, whereas the N-terminal terpene cyclase (TC) domain catalyzes the cyclization of GFPP into preterpestacin I. The cytochrome P450 monooxygenase tpcB then hydroxylates preterpestacin I to yield 24-hydroxypreterpstacin I (renamed as preterpestacin II) whereas the cytochrome P450 monooxygenase tpcC further hydroxylates preterpestacin II to yield 16,17-dihydroxypreterpestacin II (renamed as preterpestacin III). Finally, the FAD-dependent monooxygenase tpcD converts preterpestacin III into terpestacin. The chain is Cytochrome P450 monooxygenase tpcB from Cochliobolus heterostrophus (strain C5 / ATCC 48332 / race O) (Southern corn leaf blight fungus).